The primary structure comprises 358 residues: Methylthioribose-1-phosphate isomerase (358 aa).

Substrate-binding positions include 54 to 56 (RGA), Arg-96, and Gln-205. The Proton donor role is filled by Asp-246. Residue 256-257 (AK) coordinates substrate.

The protein belongs to the eIF-2B alpha/beta/delta subunits family. MtnA subfamily.

It carries out the reaction 5-(methylsulfanyl)-alpha-D-ribose 1-phosphate = 5-(methylsulfanyl)-D-ribulose 1-phosphate. It functions in the pathway amino-acid biosynthesis; L-methionine biosynthesis via salvage pathway; L-methionine from S-methyl-5-thio-alpha-D-ribose 1-phosphate: step 1/6. Functionally, catalyzes the interconversion of methylthioribose-1-phosphate (MTR-1-P) into methylthioribulose-1-phosphate (MTRu-1-P). The chain is Methylthioribose-1-phosphate isomerase from Pseudomonas entomophila (strain L48).